Here is a 734-residue protein sequence, read N- to C-terminus: ABC transporter D family member 1 (734 aa).

4 helical membrane-spanning segments follow: residues 52–72 (IIKI…ILFG), 112–132 (FAIG…SIMA), 177–197 (FTTL…VVVY), and 204–224 (TTID…GYLI). The region spanning 63–351 (PLTLFLILFG…VEEEQAKIQF (289 aa)) is the ABC transmembrane type-1 domain. Residues 271-286 (HPEKRFDNNDYDHGYE) are compositionally biased toward basic and acidic residues. The segment at 271–296 (HPEKRFDNNDYDHGYESDDSDQSCDE) is disordered. Residues 332-359 (DSNDQKEELLVEEEQAKIQFEALLKNKK) are a coiled coil. The helical transmembrane segment at 374–394 (LFTYLSPIANYFIIAIPVFFL) threads the bilayer. One can recognise an ABC transporter domain in the interval 492–729 (ITLDDVTYFT…NNNNTNKIAE (238 aa)). 525 to 532 (GPSGSGKS) lines the ATP pocket. The span at 712–725 (QSNNINNNNNNNTN) shows a compositional bias: low complexity. The disordered stretch occupies residues 712–734 (QSNNINNNNNNNTNKIAEDSVFD).

This sequence belongs to the ABC transporter superfamily. ABCD family. Peroxisomal fatty acyl CoA transporter (TC 3.A.1.203) subfamily.

Its subcellular location is the membrane. The enzyme catalyses (9Z)-octadecenoyl-CoA(in) = (9Z)-octadecenoyl-CoA(out). The polypeptide is ABC transporter D family member 1 (abcD1) (Dictyostelium discoideum (Social amoeba)).